A 411-amino-acid chain; its full sequence is LL-diaminopimelate aminotransferase (411 aa).

Residues Y15 and G42 each contribute to the substrate site. Residues Y72, 108-109 (SK), Y132, N187, Y218, and 246-248 (SFS) contribute to the pyridoxal 5'-phosphate site. Substrate-binding residues include K109, Y132, and N187. Residue K249 is modified to N6-(pyridoxal phosphate)lysine. 2 residues coordinate pyridoxal 5'-phosphate: R257 and N292. Substrate-binding residues include N292 and R388.

The protein belongs to the class-I pyridoxal-phosphate-dependent aminotransferase family. LL-diaminopimelate aminotransferase subfamily. As to quaternary structure, homodimer. Pyridoxal 5'-phosphate serves as cofactor.

The catalysed reaction is (2S,6S)-2,6-diaminopimelate + 2-oxoglutarate = (S)-2,3,4,5-tetrahydrodipicolinate + L-glutamate + H2O + H(+). It participates in amino-acid biosynthesis; L-lysine biosynthesis via DAP pathway; LL-2,6-diaminopimelate from (S)-tetrahydrodipicolinate (aminotransferase route): step 1/1. Involved in the synthesis of meso-diaminopimelate (m-DAP or DL-DAP), required for both lysine and peptidoglycan biosynthesis. Catalyzes the direct conversion of tetrahydrodipicolinate to LL-diaminopimelate. The polypeptide is LL-diaminopimelate aminotransferase (Synechococcus sp. (strain JA-3-3Ab) (Cyanobacteria bacterium Yellowstone A-Prime)).